A 221-amino-acid chain; its full sequence is RNA pyrophosphohydrolase (221 aa).

The Nudix hydrolase domain occupies 6-149 (GFRPNVGIVL…KRSVYALALT (144 aa)). The Nudix box motif lies at 38 to 59 (GGIDRGETPEQAMFRELHEEVG).

Belongs to the Nudix hydrolase family. RppH subfamily. It depends on a divalent metal cation as a cofactor.

In terms of biological role, accelerates the degradation of transcripts by removing pyrophosphate from the 5'-end of triphosphorylated RNA, leading to a more labile monophosphorylated state that can stimulate subsequent ribonuclease cleavage. The chain is RNA pyrophosphohydrolase from Verminephrobacter eiseniae (strain EF01-2).